Here is a 392-residue protein sequence, read N- to C-terminus: Adenosine 3'-phospho 5'-phosphosulfate transporter 2 (392 aa).

The tract at residues 11–35 (NINGSASGQQAPTSNSPTLTRKSSS) is disordered. 10 helical membrane passes run 62–82 (CAGV…IFTV), 87–107 (PFGW…GLVE), 136–156 (LVLA…LGYL), 159–179 (PTQV…SILI), 185–205 (GPLD…FTLA), 212–232 (NFNL…AAIG), 249–269 (VVFY…LVTG), 286–306 (FGYG…VLAL), 314–334 (IAAT…FVLF), and 338–358 (FTVQ…LNVY).

Belongs to the nucleotide-sugar transporter family. SLC35B subfamily.

It is found in the golgi apparatus membrane. In terms of biological role, mediates the transport of adenosine 3'-phospho 5'-phosphosulfate (PAPS), from cytosol into Golgi. PAPS is a universal sulfuryl donor for sulfation events that take place in the Golgi. Essential for viability. Involved in glycosaminoglycan synthesis and the subsequent signaling. May be involved in hh and dpp signaling by controlling the sulfation of heparan sulfate (HS). The sequence is that of Adenosine 3'-phospho 5'-phosphosulfate transporter 2 from Drosophila pseudoobscura pseudoobscura (Fruit fly).